A 459-amino-acid polypeptide reads, in one-letter code: DnaJ protein homolog XDJ1 (459 aa).

A J domain is found at 7-79 (GDRLYDVLGV…KSHYDLYGDD (73 aa)). The CR-type zinc-finger motif lies at 146–240 (GKKLKFDLKR…CAGLGLLSKK (95 aa)). CXXCXGXG motif repeat units follow at residues 159-166 (CIKCHGSG), 181-188 (CESCAGKG), 208-215 (CEKCNGKG), and 228-235 (CPDCAGLG).

The protein localises to the mitochondrion outer membrane. This chain is DnaJ protein homolog XDJ1 (XDJ1), found in Saccharomyces cerevisiae (strain ATCC 204508 / S288c) (Baker's yeast).